Consider the following 185-residue polypeptide: Threonylcarbamoyl-AMP synthase (185 aa).

In terms of domain architecture, YrdC-like spans 3–185 (EQAPDEVQEI…VDAISGKVLR (183 aa)).

The protein belongs to the SUA5 family. TsaC subfamily.

It is found in the cytoplasm. The catalysed reaction is L-threonine + hydrogencarbonate + ATP = L-threonylcarbamoyladenylate + diphosphate + H2O. Functionally, required for the formation of a threonylcarbamoyl group on adenosine at position 37 (t(6)A37) in tRNAs that read codons beginning with adenine. Catalyzes the conversion of L-threonine, HCO(3)(-)/CO(2) and ATP to give threonylcarbamoyl-AMP (TC-AMP) as the acyladenylate intermediate, with the release of diphosphate. The sequence is that of Threonylcarbamoyl-AMP synthase from Shewanella sediminis (strain HAW-EB3).